A 208-amino-acid chain; its full sequence is Methyl-CpG-binding domain protein 3-like 4 (208 aa).

The protein belongs to the MBD3L family.

The chain is Methyl-CpG-binding domain protein 3-like 4 (MBD3L4) from Homo sapiens (Human).